Consider the following 142-residue polypeptide: Peptide methionine sulfoxide reductase MsrB (142 aa).

The region spanning 2–125 (LKKDKSELTD…NSAAIQFIPY (124 aa)) is the MsrB domain. The Nucleophile role is filled by Cys114.

The protein belongs to the MsrB Met sulfoxide reductase family.

It carries out the reaction L-methionyl-[protein] + [thioredoxin]-disulfide + H2O = L-methionyl-(R)-S-oxide-[protein] + [thioredoxin]-dithiol. In Staphylococcus aureus (strain USA300), this protein is Peptide methionine sulfoxide reductase MsrB.